Reading from the N-terminus, the 220-residue chain is NADH-quinone oxidoreductase subunit I (220 aa).

4Fe-4S ferredoxin-type domains are found at residues 71–102 (LQRL…IITH) and 112–141 (DSYT…MGNR). Residues Cys-82, Cys-85, Cys-88, Cys-92, Cys-121, Cys-124, Cys-127, and Cys-131 each coordinate [4Fe-4S] cluster. The interval 187–220 (MQATPLDYVQEPSKEESKEESPTSPESHKGDENV) is disordered. Residues 198–220 (PSKEESKEESPTSPESHKGDENV) show a composition bias toward basic and acidic residues.

The protein belongs to the complex I 23 kDa subunit family. NDH-1 is composed of 14 different subunits. Subunits NuoA, H, J, K, L, M, N constitute the membrane sector of the complex. [4Fe-4S] cluster is required as a cofactor.

Its subcellular location is the cell inner membrane. The enzyme catalyses a quinone + NADH + 5 H(+)(in) = a quinol + NAD(+) + 4 H(+)(out). NDH-1 shuttles electrons from NADH, via FMN and iron-sulfur (Fe-S) centers, to quinones in the respiratory chain. The immediate electron acceptor for the enzyme in this species is believed to be ubiquinone. Couples the redox reaction to proton translocation (for every two electrons transferred, four hydrogen ions are translocated across the cytoplasmic membrane), and thus conserves the redox energy in a proton gradient. This Helicobacter pylori (strain J99 / ATCC 700824) (Campylobacter pylori J99) protein is NADH-quinone oxidoreductase subunit I.